Reading from the N-terminus, the 773-residue chain is Immunoglobulin domain and leucine-rich repeat-containing protein 2 (773 aa).

An N-terminal signal peptide occupies residues 1–20; sequence MRKFVFFVVAILIQIHTTTS. Over 21 to 493 the chain is Extracellular; it reads QRNRSSSPSG…DWYSYDVFNS (473 aa). LRR repeat units follow at residues 52–73, 74–96, 97–120, 122–144, 145–167, and 168–191; these read TRNI…KIYG, SNIQ…IFAP, FPQL…VIHP, LKVL…LLSI, FPKI…DTSN, and TKLK…TLRV. N-linked (GlcNAc...) asparagine glycosylation is present at asparagine 114. The N-linked (GlcNAc...) asparagine glycan is linked to asparagine 204. LRR repeat units follow at residues 206–230, 233–251, 252–275, and 296–319; these read STKL…DWKF, LRSL…QLDA, PLLN…ILTP, and PSTV…FIPM. Residues 349–479 form the Ig-like domain; that stretch reads PVYAQTSIRK…GKDYGIYHFR (131 aa). Residues asparagine 361 and asparagine 379 are each glycosylated (N-linked (GlcNAc...) asparagine). A disulfide bridge links cysteine 396 with cysteine 463. The chain crosses the membrane as a helical span at residues 494–514; the sequence is VFWGGLATSLIVCLISFLLNI. The Cytoplasmic segment spans residues 515–773; sequence TWILTRKSAL…RSPDSPPEKR (259 aa). Residues 725-773 form a disordered region; the sequence is VRPGIIPTNAPSIRFTTKPTTSSISNEASTSSPSSSGAHRSPDSPPEKR. Residues 733–745 are compositionally biased toward polar residues; the sequence is NAPSIRFTTKPTT. Positions 746-763 are enriched in low complexity; sequence SSISNEASTSSPSSSGAH. The segment covering 764-773 has biased composition (basic and acidic residues); that stretch reads RSPDSPPEKR.

The protein resides in the membrane. The protein is Immunoglobulin domain and leucine-rich repeat-containing protein 2 of Caenorhabditis elegans.